A 446-amino-acid chain; its full sequence is MSFKEEYQKKLKTADEAVKVVKSGDWLEYGWCVTTPAALDKALAKRMPELENINIRGGIVMWPLEITKIDSPADHFTWNSWHMGGLERKWIKEGFSYYAPIRYSELPGYYRNYIDHVDVAMMQVAPMDEHGFFNFGPSASHLAAMLEKADCVIVEVNENMPRCLGGFEEGVHISKVDMIVEGENPAIAELGGGGAATDVDKAVAKLIVDQIPNGACLQLGIGGMPNAVGSMIAESDLKDLGVHTEMYVDAFVDIAKAGKITGARKNIDRYRQTYAFAAGTKKLYDYLNDNPECMSAPVNYTNDIARVSSIDNFISINNAVDVDLYGQISAESSGIKQISGAGGQLDFVMGAYLSNGGKSFVCLSSTFTDKAGQMHSRILPTLHNGSIVTDTRANAHYIVTEYGMANMKGLSAWQRAEALINIAHPDFRDQLIKDAEKAQIWRRSNK.

220-224 contacts CoA; sequence GIGGM. Residue glutamate 245 is the 5-glutamyl coenzyme A thioester intermediate of the active site. 3 residues coordinate CoA: valine 320, glycine 343, and lysine 370.

It belongs to the acetyl-CoA hydrolase/transferase family. Butyryl-CoA CoA-transferase subfamily.

It carries out the reaction butanoate + acetyl-CoA = butanoyl-CoA + acetate. The catalysed reaction is propanoate + acetyl-CoA = propanoyl-CoA + acetate. The protein operates within lipid metabolism; butanoate metabolism. Its function is as follows. Coenzyme A-transferase that converts butyryl-CoA to butyrate. Can also use proprionyl-CoA as substrate in vitro. The protein is Butyryl-CoA:acetate CoA-transferase of Anaerostipes caccae (strain DSM 14662 / CCUG 47493 / JCM 13470 / NCIMB 13811 / L1-92).